The chain runs to 761 residues: Xaa-Pro dipeptidyl-peptidase (761 aa).

Active-site charge relay system residues include S347, D467, and H497.

The protein belongs to the peptidase S15 family. In terms of assembly, homodimer.

It localises to the cytoplasm. The enzyme catalyses Hydrolyzes Xaa-Pro-|- bonds to release unblocked, N-terminal dipeptides from substrates including Ala-Pro-|-p-nitroanilide and (sequentially) Tyr-Pro-|-Phe-Pro-|-Gly-Pro-|-Ile.. Its function is as follows. Removes N-terminal dipeptides sequentially from polypeptides having unsubstituted N-termini provided that the penultimate residue is proline. The polypeptide is Xaa-Pro dipeptidyl-peptidase (Streptococcus agalactiae serotype Ia (strain ATCC 27591 / A909 / CDC SS700)).